The primary structure comprises 174 residues: UPF0398 protein llmg_0513 (174 aa).

It belongs to the UPF0398 family.

This chain is UPF0398 protein llmg_0513, found in Lactococcus lactis subsp. cremoris (strain MG1363).